Reading from the N-terminus, the 255-residue chain is ATP synthase subunit a (255 aa).

Residues 1-6 (MNFIIN) constitute a propeptide, removed in mature form. Helical transmembrane passes span 32-52 (LTSF…FSIL), 91-111 (LFPF…VSLV), 121-141 (LIWT…TGLA), 159-200 (PLVP…LAGL), and 219-251 (LSIL…IKDA).

As to quaternary structure, F-type ATP synthases have 2 components, the catalytic core F(1) and the membrane-embedded component F(0), linked together by a central stalk and a peripheral stalk. The central stalk, also called rotor shaft, is often seen as part of F(1). The peripheral stalk is seen as part of F(0). F(0) contains the membrane channel next to the rotor. F-type ATP synthases form dimers but each monomer functions independently in ATP generation. The dimer consists of 17 different polypeptides: ATP1 (subunit alpha, 3 molecules per monomer, part of F(1)), ATP2 (subunit beta, 3 copies per monomer, part of F(1)), ATP3 (subunit gamma, part of the central stalk), ATP4 (subunit b, part of the peripheral stalk), ATP5/OSCP (subunit 5/OSCP, part of the peripheral stalk), ATP6 (subunit a, part of the peripheral stalk), ATP7 (subunit d, part of the peripheral stalk), ATP8 (subunit 8, part of the peripheral stalk), OLI1 (subunit c, part of the rotor, 10 molecules per monomer), ATP14 (subunit h, part of the peripheral stalk), ATP15 (subunit epsilon, part of the central stalk), ATP16 (subunit delta, part of the central stalk), ATP17 (subunit f, part of the peripheral stalk), ATP18 (subunit i/j, part of the peripheral stalk), ATP19 (subunit k, dimer-specific, at interface between monomers), ATP20 (subunit g, at interface between monomers), TIM11 (subunit e, at interface between monomers).

Its subcellular location is the mitochondrion inner membrane. Functionally, mitochondrial membrane ATP synthase (F(1)F(0) ATP synthase or Complex V) produces ATP from ADP in the presence of a proton gradient across the membrane which is generated by electron transport complexes of the respiratory chain. F-type ATP synthases consist of two structural domains, F(1) - containing the extramembraneous catalytic core, and F(0) - containing the membrane proton channel, linked together by a central stalk and a peripheral stalk. During catalysis, ATP synthesis in the catalytic domain of F(1) is coupled via a rotary mechanism of the central stalk subunits to proton translocation. Key component of the proton channel; it may play a direct role in the translocation of protons across the membrane. This chain is ATP synthase subunit a, found in Yarrowia lipolytica (strain CLIB 122 / E 150) (Yeast).